Consider the following 518-residue polypeptide: Arrestin-related trafficking adapter 10 (518 aa).

K118 participates in a covalent cross-link: Glycyl lysine isopeptide (Lys-Gly) (interchain with G-Cter in ubiquitin).

It belongs to the ART10 family. In terms of assembly, interacts with RSP5. In terms of processing, ubiquitinated by RSP5.

The protein resides in the cytoplasm. In terms of biological role, may regulate endocytosis by recruiting RSP5 ubiquitin ligase activity to specific plasma membrane proteins in response to extracellular stimuli. In Saccharomyces cerevisiae (strain RM11-1a) (Baker's yeast), this protein is Arrestin-related trafficking adapter 10 (ART10).